Reading from the N-terminus, the 327-residue chain is Movement protein (327 aa).

Residues 297–327 are a coiled coil; it reads IASSSSTENELARVSQNIDLLKNKLKEICGE.

It belongs to the caulimoviridae movement protein family. As to quaternary structure, homotrimer, through the coiled-coil domain. Interacts with VAP. May interact (via N-terminus) with host prenylated Rab acceptor protein 1D (PRA1D).

The protein resides in the host cell junction. Its subcellular location is the host plasmodesma. Its function is as follows. Transports viral genome to neighboring plant cells directly through plasmosdesmata, without any budding. The movement protein allows efficient cell to cell propagation, by bypassing the host cell wall barrier. Acts by forming tubules structures that increase the size exclusion limit (SEL) of plasmodesmata, thereby allowing viral ribonucleocapsids to spread directly to neighboring cells. The protein is Movement protein of Cauliflower mosaic virus (strain D/H) (CaMV).